A 720-amino-acid chain; its full sequence is Fatty acid CoA ligase Acsl3 (720 aa).

The chain crosses the membrane as a helical; Signal-anchor for type III membrane protein span at residues 21-41 (ILLYFIHFLISLYTILTYIPF). Over 42-720 (YFFSESRQEK…ADIERMYGRK (679 aa)) the chain is Cytoplasmic. The residue at position 683 (serine 683) is a Phosphoserine.

This sequence belongs to the ATP-dependent AMP-binding enzyme family. The cofactor is Mg(2+).

It localises to the mitochondrion outer membrane. The protein localises to the peroxisome membrane. Its subcellular location is the microsome membrane. The protein resides in the endoplasmic reticulum membrane. It carries out the reaction a long-chain fatty acid + ATP + CoA = a long-chain fatty acyl-CoA + AMP + diphosphate. It catalyses the reaction (5Z,8Z,11Z,14Z)-eicosatetraenoate + ATP + CoA = (5Z,8Z,11Z,14Z)-eicosatetraenoyl-CoA + AMP + diphosphate. The catalysed reaction is (E)-hexadec-2-enoate + ATP + CoA = (2E)-hexadecenoyl-CoA + AMP + diphosphate. The enzyme catalyses 15-hydroxy-(5Z,8Z,11Z,13E)-eicosatetraenoate + ATP + CoA = 15-hydroxy-(5Z,8Z,11Z,13E)-eicosatetraenoyl-CoA + AMP + diphosphate. It carries out the reaction 12-hydroxy-(5Z,8Z,10E,14Z)-eicosatetraenoate + ATP + CoA = 12-hydroxy-(5Z,8Z,10E,14Z)-eicosatetraenoyl-CoA + AMP + diphosphate. It catalyses the reaction 5-hydroxy-(6E,8Z,11Z,14Z)-eicosatetraenoate + ATP + CoA = 5-hydroxy-(6E,8Z,11Z,14Z)-eicosatetraenoyl-CoA + AMP + diphosphate. The catalysed reaction is 14,15-epoxy-(5Z,8Z,11Z)-eicosatrienoate + ATP + CoA = 14,15-epoxy-(5Z,8Z,11Z)-eicosatrienoyl-CoA + AMP + diphosphate. The enzyme catalyses 11,12-epoxy-(5Z,8Z,14Z)-eicosatrienoate + ATP + CoA = 11,12-epoxy-(5Z,8Z,14Z)-eicosatrienoyl-CoA + AMP + diphosphate. It carries out the reaction a medium-chain fatty acid + ATP + CoA = a medium-chain fatty acyl-CoA + AMP + diphosphate. It catalyses the reaction hexadecanoate + ATP + CoA = hexadecanoyl-CoA + AMP + diphosphate. The catalysed reaction is tetradecanoate + ATP + CoA = tetradecanoyl-CoA + AMP + diphosphate. The enzyme catalyses dodecanoate + ATP + CoA = dodecanoyl-CoA + AMP + diphosphate. It carries out the reaction octadecanoate + ATP + CoA = octadecanoyl-CoA + AMP + diphosphate. It catalyses the reaction eicosanoate + ATP + CoA = eicosanoyl-CoA + AMP + diphosphate. The catalysed reaction is (9Z)-octadecenoate + ATP + CoA = (9Z)-octadecenoyl-CoA + AMP + diphosphate. The enzyme catalyses (9Z)-hexadecenoate + ATP + CoA = (9Z)-hexadecenoyl-CoA + AMP + diphosphate. It carries out the reaction (9Z,12Z)-octadecadienoate + ATP + CoA = (9Z,12Z)-octadecadienoyl-CoA + AMP + diphosphate. It catalyses the reaction (9Z,12Z,15Z)-octadecatrienoate + ATP + CoA = (9Z,12Z,15Z)-octadecatrienoyl-CoA + AMP + diphosphate. The catalysed reaction is (4Z,7Z,10Z,13Z,16Z,19Z)-docosahexaenoate + ATP + CoA = (4Z,7Z,10Z,13Z,16Z,19Z)-docosahexaenoyl-CoA + AMP + diphosphate. The enzyme catalyses (5Z,8Z,11Z,14Z,17Z)-eicosapentaenoate + ATP + CoA = (5Z,8Z,11Z,14Z,17Z)-eicosapentaenoyl-CoA + AMP + diphosphate. It carries out the reaction a fatty acid + ATP + CoA = a fatty acyl-CoA + AMP + diphosphate. Functionally, acyl-CoA synthetases (ACSL) activates long-chain fatty acids for both synthesis of cellular lipids, and degradation via beta-oxidation. Required for the incorporation of fatty acids into phosphatidylcholine, the major phospholipid located on the surface of VLDL (very low density lipoproteins). Has mainly an anabolic role in energy metabolism. Mediates hepatic lipogenesis. Preferentially uses myristate, laurate, arachidonate and eicosapentaenoate as substrates. Both isoforms exhibit the same level of activity. This is Fatty acid CoA ligase Acsl3 from Homo sapiens (Human).